A 323-amino-acid polypeptide reads, in one-letter code: Putative ABC transporter substrate-binding lipoprotein YhfQ (323 aa).

The N-terminal stretch at 1–19 (MKKTLIILTVLLLSVLTAA) is a signal peptide. The N-palmitoyl cysteine moiety is linked to residue C20. C20 carries the S-diacylglycerol cysteine lipid modification. The region spanning 51–322 (RVVVLELGFI…ELQKEMPAAK (272 aa)) is the Fe/B12 periplasmic-binding domain.

Belongs to the bacterial solute-binding protein 8 family. As to quaternary structure, interacts with FloT.

Its subcellular location is the cell membrane. It is found in the membrane raft. In Bacillus subtilis (strain 168), this protein is Putative ABC transporter substrate-binding lipoprotein YhfQ (yhfQ).